A 242-amino-acid chain; its full sequence is Ras-like protein family member 11A (242 aa).

A small GTPase-like region spans residues 17-241 (ESSSDYLLPK…SSKAKASSAL (225 aa)). Residues 34–41 (GAGCVGKS), 81–88 (DTPGGIQA), and 147–150 (NKGD) contribute to the GTP site.

It belongs to the small GTPase superfamily. Ras family. Interacts with UBF/UBTF.

The protein resides in the nucleus. It localises to the nucleolus. The enzyme catalyses GTP + H2O = GDP + phosphate + H(+). Functionally, regulator of rDNA transcription. Acts in cooperation UBF/UBTF and positively regulates RNA polymerase I transcription. In Mus musculus (Mouse), this protein is Ras-like protein family member 11A.